The following is a 124-amino-acid chain: Multifunctional methyltransferase subunit TRM112 homolog A (124 aa).

A TRM112 domain is found at 2 to 120 (RLITHNMLSC…NKGIPNMLLH (119 aa)).

Belongs to the TRM112 family. Interacts with TRM9.

Functionally, acts as an activator of both rRNA/tRNA and protein methyltransferases. Required for TRM9 tRNA methyltransferase activity. Involved in the regulation of cell division progression during organ growth. Required for the expression of cell cycle-related genes, and the G2-M phase progression during organogenesis. This Arabidopsis thaliana (Mouse-ear cress) protein is Multifunctional methyltransferase subunit TRM112 homolog A.